Here is a 134-residue protein sequence, read N- to C-terminus: Probable glycine cleavage system H protein (134 aa).

Positions 29-110 (TVLVGITDYA…PYENWIAKLK (82 aa)) constitute a Lipoyl-binding domain. Residue Lys-70 is modified to N6-lipoyllysine.

It belongs to the GcvH family. As to quaternary structure, the glycine cleavage system is composed of four proteins: P, T, L and H. It depends on (R)-lipoate as a cofactor.

The glycine cleavage system catalyzes the degradation of glycine. The H protein shuttles the methylamine group of glycine from the P protein to the T protein. This Thermococcus gammatolerans (strain DSM 15229 / JCM 11827 / EJ3) protein is Probable glycine cleavage system H protein.